Consider the following 364-residue polypeptide: Aminomethyltransferase (364 aa).

It belongs to the GcvT family. The glycine cleavage system is composed of four proteins: P, T, L and H.

The catalysed reaction is N(6)-[(R)-S(8)-aminomethyldihydrolipoyl]-L-lysyl-[protein] + (6S)-5,6,7,8-tetrahydrofolate = N(6)-[(R)-dihydrolipoyl]-L-lysyl-[protein] + (6R)-5,10-methylene-5,6,7,8-tetrahydrofolate + NH4(+). Functionally, the glycine cleavage system catalyzes the degradation of glycine. This is Aminomethyltransferase from Escherichia coli O127:H6 (strain E2348/69 / EPEC).